A 300-amino-acid polypeptide reads, in one-letter code: GTPase Era (300 aa).

The Era-type G domain occupies 6-173 (KSGFLSIIGR…VDVLKEHLPE (168 aa)). The segment at 14–21 (GRPNVGKS) is G1. Residue 14–21 (GRPNVGKS) participates in GTP binding. Residues 40-44 (QTTRN) are G2. Positions 61-64 (DTPG) are G3. GTP is bound by residues 61–65 (DTPGI) and 123–126 (NKID). Residues 123–126 (NKID) are G4. Residues 152–154 (ISA) form a G5 region. The KH type-2 domain maps to 204-281 (TKEEVPHSIA…YLELWIKVKK (78 aa)).

The protein belongs to the TRAFAC class TrmE-Era-EngA-EngB-Septin-like GTPase superfamily. Era GTPase family. As to quaternary structure, monomer.

It is found in the cytoplasm. It localises to the cell membrane. Its function is as follows. An essential GTPase that binds both GDP and GTP, with rapid nucleotide exchange. Plays a role in 16S rRNA processing and 30S ribosomal subunit biogenesis and possibly also in cell cycle regulation and energy metabolism. This is GTPase Era from Oceanobacillus iheyensis (strain DSM 14371 / CIP 107618 / JCM 11309 / KCTC 3954 / HTE831).